The following is a 352-amino-acid chain: Alpha-2-HS-glycoprotein (352 aa).

A signal peptide spans 1 to 18 (MKSLVLLLCFAQLWSCQS). A Cystatin fetuin-A-type 1 domain is found at 19-133 (APQGAGLGFR…QFRVLHAQCH (115 aa)). 6 cysteine pairs are disulfide-bonded: Cys32/Cys343, Cys89/Cys100, Cys114/Cys132, Cys146/Cys149, Cys208/Cys219, and Cys230/Cys247. Asn99 is a glycosylation site (N-linked (GlcNAc...) asparagine). Ser134 carries the phosphoserine modification. Phosphothreonine is present on Thr135. A Phosphoserine modification is found at Ser138. Residues 144–250 (KFCPRCPILI…EEVSVACKLF (107 aa)) enclose the Cystatin fetuin-A-type 2 domain. Residues Asn156 and Asn176 are each glycosylated (N-linked (GlcNAc...) asparagine). The segment covering 256 to 273 (PANANPAGPAPTVGQAAP) has biased composition (low complexity). The tract at residues 256–280 (PANANPAGPAPTVGQAAPVAPPAGP) is disordered. A phosphoserine mark is found at Ser309, Ser313, Ser316, and Ser318. A disordered region spans residues 319-338 (GEVLHSPKVGQPGDAGAAGP). The span at 328 to 338 (GQPGDAGAAGP) shows a compositional bias: low complexity.

The protein belongs to the fetuin family. Post-translationally, undergoes complex post-translational modification involving N-glycosylation, and addition of fucose and sialic acid residues. Phosphorylation occurs at a serine residue. In terms of processing, phosphorylated by FAM20C in the extracellular medium. As to expression, synthesized in liver and secreted by the hepatocytes in the blood.

The protein localises to the secreted. Functionally, could inhibit both insulin-receptor tyrosine kinase activity and insulin-stimulated receptor autophosphorylation and, concomitantly, antagonize the mitogenic effect of the hormone in cultured rat hepatoma cells. The protein is Alpha-2-HS-glycoprotein (Ahsg) of Rattus norvegicus (Rat).